A 153-amino-acid polypeptide reads, in one-letter code: 6,7-dimethyl-8-ribityllumazine synthase (153 aa).

5-amino-6-(D-ribitylamino)uracil is bound by residues F22, 56–58 (AFE), and 80–82 (TVI). 85–86 (ST) contacts (2S)-2-hydroxy-3-oxobutyl phosphate. The Proton donor role is filled by H88. F113 is a binding site for 5-amino-6-(D-ribitylamino)uracil. Position 127 (R127) interacts with (2S)-2-hydroxy-3-oxobutyl phosphate.

This sequence belongs to the DMRL synthase family. As to quaternary structure, forms an icosahedral capsid composed of 60 subunits, arranged as a dodecamer of pentamers.

The enzyme catalyses (2S)-2-hydroxy-3-oxobutyl phosphate + 5-amino-6-(D-ribitylamino)uracil = 6,7-dimethyl-8-(1-D-ribityl)lumazine + phosphate + 2 H2O + H(+). It functions in the pathway cofactor biosynthesis; riboflavin biosynthesis; riboflavin from 2-hydroxy-3-oxobutyl phosphate and 5-amino-6-(D-ribitylamino)uracil: step 1/2. Catalyzes the formation of 6,7-dimethyl-8-ribityllumazine by condensation of 5-amino-6-(D-ribitylamino)uracil with 3,4-dihydroxy-2-butanone 4-phosphate. This is the penultimate step in the biosynthesis of riboflavin. The sequence is that of 6,7-dimethyl-8-ribityllumazine synthase from Glaesserella parasuis serovar 5 (strain SH0165) (Haemophilus parasuis).